Consider the following 500-residue polypeptide: Lysine--tRNA ligase (500 aa).

Mg(2+)-binding residues include E410 and E417.

Belongs to the class-II aminoacyl-tRNA synthetase family. In terms of assembly, homodimer. The cofactor is Mg(2+).

It localises to the cytoplasm. The enzyme catalyses tRNA(Lys) + L-lysine + ATP = L-lysyl-tRNA(Lys) + AMP + diphosphate. The sequence is that of Lysine--tRNA ligase from Pseudomonas putida (strain ATCC 700007 / DSM 6899 / JCM 31910 / BCRC 17059 / LMG 24140 / F1).